The chain runs to 89 residues: RNA-binding protein Hfq (89 aa).

Residues 9–68 form the Sm domain; the sequence is DPFLNALRRERVPVSIYLVNGIKLQGQVESFDQFVILLKNTVSQMVYKHAISTVVPARAL.

It belongs to the Hfq family. Homohexamer.

In terms of biological role, RNA chaperone that binds small regulatory RNA (sRNAs) and mRNAs to facilitate mRNA translational regulation in response to envelope stress, environmental stress and changes in metabolite concentrations. Also binds with high specificity to tRNAs. This Shewanella denitrificans (strain OS217 / ATCC BAA-1090 / DSM 15013) protein is RNA-binding protein Hfq.